The chain runs to 180 residues: uncharacterized protein (180 aa).

Coiled-coil stretches lie at residues 3-82 (LKSL…QKIA) and 95-179 (REYE…EKYG).

This is an uncharacterized protein from Aquifex aeolicus (strain VF5).